Consider the following 400-residue polypeptide: Diphosphomevalonate decarboxylase (400 aa).

(R)-5-diphosphomevalonate-binding positions include 19–22 (YWGK), Arg-75, 154–159 (SGSACR), and Thr-210. The interval 381–400 (DGPRTLGPEEALLSPDGLPK) is disordered.

The protein belongs to the diphosphomevalonate decarboxylase family.

The enzyme catalyses (R)-5-diphosphomevalonate + ATP = isopentenyl diphosphate + ADP + phosphate + CO2. Its pathway is isoprenoid biosynthesis; isopentenyl diphosphate biosynthesis via mevalonate pathway; isopentenyl diphosphate from (R)-mevalonate: step 3/3. Diphosphomevalonate decarboxylase; part of the second module of ergosterol biosynthesis pathway that includes the middle steps of the pathway. The second module involves the formation of farnesyl diphosphate, which is also an important intermediate in the biosynthesis of ubiquinone, dolichol, heme and prenylated proteins. This module also plays a key role in the biosynthesis of triterpenes such as ganoderic acids (GA), a group of highly oxygenated lanostane-type triterpenoids which are well recognized as a main group of unique bioactive compounds in the medicinal mushroom Ganoderma lucidum. Activity by the mevalonate kinase first converts mevalonate into 5-phosphomevalonate. 5-phosphomevalonate is then further converted to 5-diphosphomevalonate by the phosphomevalonate kinase. The diphosphomevalonate decarboxylase MVD then produces isopentenyl diphosphate. The isopentenyl-diphosphate delta-isomerase then catalyzes the 1,3-allylic rearrangement of the homoallylic substrate isopentenyl (IPP) to its highly electrophilic allylic isomer, dimethylallyl diphosphate (DMAPP). Finally the farnesyl diphosphate synthase FPS catalyzes the sequential condensation of isopentenyl pyrophosphate with dimethylallyl pyrophosphate, and then with the resultant geranylpyrophosphate to the ultimate product farnesyl pyrophosphate. The sequence is that of Diphosphomevalonate decarboxylase from Ganoderma lucidum (Ling zhi medicinal fungus).